The primary structure comprises 387 residues: 3-ketoacyl-CoA thiolase FadA (387 aa).

Cysteine 91 functions as the Acyl-thioester intermediate in the catalytic mechanism. Catalysis depends on proton acceptor residues histidine 343 and cysteine 373.

This sequence belongs to the thiolase-like superfamily. Thiolase family. As to quaternary structure, heterotetramer of two alpha chains (FadB) and two beta chains (FadA).

The protein resides in the cytoplasm. It carries out the reaction an acyl-CoA + acetyl-CoA = a 3-oxoacyl-CoA + CoA. It participates in lipid metabolism; fatty acid beta-oxidation. Its function is as follows. Catalyzes the final step of fatty acid oxidation in which acetyl-CoA is released and the CoA ester of a fatty acid two carbons shorter is formed. Involved in the aerobic and anaerobic degradation of long-chain fatty acids. In Escherichia coli (strain K12), this protein is 3-ketoacyl-CoA thiolase FadA (fadA).